Consider the following 264-residue polypeptide: Tritrans,polycis-undecaprenyl-diphosphate synthase (geranylgeranyl-diphosphate specific) (264 aa).

The active site involves aspartate 43. Aspartate 43 is a binding site for Mg(2+). Residues 44–47 (GNRR), tryptophan 48, histidine 60, and 88–90 (STE) each bind substrate. Asparagine 91 serves as the catalytic Proton acceptor. Substrate-binding positions include phenylalanine 92, arginine 94, arginine 213, and 219–221 (RIS). Glutamate 232 is a Mg(2+) binding site.

It belongs to the UPP synthase family. As to quaternary structure, homodimer. Mg(2+) is required as a cofactor.

It catalyses the reaction geranylgeranyl diphosphate + 7 isopentenyl diphosphate = tri-trans,hepta-cis-undecaprenyl diphosphate + 7 diphosphate. In terms of biological role, catalyzes the sequential condensation of isopentenyl diphosphate (IPP) with geranylgeranyl diphosphate (GGPP) to yield (2Z,6Z,10Z,14Z,18Z,22Z,26Z,30E,34E,38E)-undecaprenyl diphosphate (tritrans,heptacis-UPP). It is probably the precursor of glycosyl carrier lipids. In Pyrococcus abyssi (strain GE5 / Orsay), this protein is Tritrans,polycis-undecaprenyl-diphosphate synthase (geranylgeranyl-diphosphate specific).